Here is a 569-residue protein sequence, read N- to C-terminus: Glucose-6-phosphate isomerase, cytosolic 2 (569 aa).

Glu360 functions as the Proton donor in the catalytic mechanism. Residues His391 and Lys516 contribute to the active site.

It belongs to the GPI family. As to quaternary structure, homodimer.

The protein localises to the cytoplasm. It catalyses the reaction alpha-D-glucose 6-phosphate = beta-D-fructose 6-phosphate. It functions in the pathway carbohydrate degradation; glycolysis; D-glyceraldehyde 3-phosphate and glycerone phosphate from D-glucose: step 2/4. This Clarkia concinna (Red ribbons) protein is Glucose-6-phosphate isomerase, cytosolic 2 (PGIC2).